The primary structure comprises 1498 residues: Transposon Ty3-I Gag-Pol polyprotein (1498 aa).

The CCHC-type zinc-finger motif lies at R265–A282. D336 functions as the For protease activity; shared with dimeric partner in the catalytic mechanism. The interval T470–P490 is disordered. In terms of domain architecture, Reverse transcriptase spans L646 to I823. The Mg(2+) site is built by D712, D774, and D775. Residues D919 to Y1037 form the RNase H Ty3/gyspy-type domain. Residues H1132 to C1171 are integrase-type zinc finger-like. In terms of domain architecture, Integrase catalytic spans L1185–L1350. D1201 and D1262 together coordinate Mg(2+).

The protease is a homodimer, whose active site consists of two apposed aspartic acid residues. In terms of processing, initially, virus-like particles (VLPs) are composed of the structural unprocessed proteins Gag and Gag-Pol, and also contain the host initiator methionine tRNA (tRNA(i)-Met) which serves as a primer for minus-strand DNA synthesis, and a dimer of genomic Ty RNA. Processing of the polyproteins occurs within the particle and proceeds by an ordered pathway, called maturation. First, the protease (PR) is released by autocatalytic cleavage of the Gag-Pol polyprotein, and this cleavage is a prerequisite for subsequent processing at the remaining sites to release the mature structural and catalytic proteins. Maturation takes place prior to the RT reaction and is required to produce transposition-competent VLPs.

The protein localises to the cytoplasm. Its subcellular location is the nucleus. It catalyses the reaction DNA(n) + a 2'-deoxyribonucleoside 5'-triphosphate = DNA(n+1) + diphosphate. It carries out the reaction Endonucleolytic cleavage to 5'-phosphomonoester.. In terms of biological role, capsid protein (CA) is the structural component of the virus-like particle (VLP), forming the shell that encapsulates the genomic RNA-nucleocapsid complex. Functionally, nucleocapsid protein p11 (NC) forms the nucleocore that coats the retro-elements dimeric RNA. Binds these RNAs through its zinc fingers. Promotes primer tRNA(i)-Met annealing to the multipartite primer-binding site (PBS), dimerization of Ty3 RNA and initiation of reverse transcription. The aspartyl protease (PR) mediates the proteolytic cleavages of the Gag and Gag-Pol polyproteins after assembly of the VLP. Its function is as follows. Reverse transcriptase/ribonuclease H (RT) is a multifunctional enzyme that catalyzes the conversion of the retro-elements RNA genome into dsDNA within the VLP. The enzyme displays a DNA polymerase activity that can copy either DNA or RNA templates, and a ribonuclease H (RNase H) activity that cleaves the RNA strand of RNA-DNA heteroduplexes during plus-strand synthesis and hydrolyzes RNA primers. The conversion leads to a linear dsDNA copy of the retrotransposon that includes long terminal repeats (LTRs) at both ends. In terms of biological role, integrase (IN) targets the VLP to the nucleus, where a subparticle preintegration complex (PIC) containing at least integrase and the newly synthesized dsDNA copy of the retrotransposon must transit the nuclear membrane. Once in the nucleus, integrase performs the integration of the dsDNA into the host genome. The polypeptide is Transposon Ty3-I Gag-Pol polyprotein (TY3B-I) (Saccharomyces cerevisiae (strain ATCC 204508 / S288c) (Baker's yeast)).